The following is a 927-amino-acid chain: BTB/POZ domain-containing protein KCTD19 (927 aa).

The 55-residue stretch at 18-72 (NVGGWHFSVPRSKLAQFPDSLLWKEASALTSSENQRLFIDRDGSTFRHVHYYLYT) folds into the BTB 1 domain. The residue at position 270 (S270) is a Phosphoserine. The BTB 2 domain occupies 399–486 (IKLYVGSHWY…YHIPALSEAL (88 aa)). Residues 664–760 (VEEASLHVPS…NANGTDNPGA (97 aa)) form a disordered region. Positions 731–743 (DWGKQRPKDRESP) are enriched in basic and acidic residues.

In terms of assembly, identified in a complex with ZNF541, HDAC1 and HSPA2. Identified in a complex with ZNF541 and HDAC1. Identified in a complex with HDAC1, HDAC2, DNTTIP1 and ZNF541. As to expression, detected in adult testis.

The protein resides in the nucleus. Functionally, transcription regulator which is essential for male fertility and for the completion of meiotic prophase in spermatocytes. Regulates progression of the pachytene stage of meiotic prophase and promotes the transcriptional activation activity ZNF541. Required for the organization of chromosomes during metaphase I. The polypeptide is BTB/POZ domain-containing protein KCTD19 (Kctd19) (Mus musculus (Mouse)).